Here is a 95-residue protein sequence, read N- to C-terminus: Large ribosomal subunit protein uL23 (95 aa).

The protein belongs to the universal ribosomal protein uL23 family. In terms of assembly, part of the 50S ribosomal subunit. Contacts protein L29, and trigger factor when it is bound to the ribosome.

Its function is as follows. One of the early assembly proteins it binds 23S rRNA. One of the proteins that surrounds the polypeptide exit tunnel on the outside of the ribosome. Forms the main docking site for trigger factor binding to the ribosome. The protein is Large ribosomal subunit protein uL23 of Pediococcus pentosaceus (strain ATCC 25745 / CCUG 21536 / LMG 10740 / 183-1w).